The sequence spans 1136 residues: Phytochrome (1136 aa).

Residues 1–28 (MSTTRPRAATHSASSGSVSRSSKHSARV) are disordered. The segment covering 11-20 (HSASSGSVSR) has biased composition (low complexity). Residues 231 to 414 (DIRLLCDTVV…VFGIQLNKEV (184 aa)) form the GAF domain. Residue cysteine 336 participates in phytochromobilin binding. 2 PAS domains span residues 629-699 (VTNE…LQGE) and 762-833 (DYRA…TKLR). The region spanning 913-1132 (YIRQEIRNPL…IINVEFPLAQ (220 aa)) is the Histidine kinase domain.

It belongs to the phytochrome family. As to quaternary structure, homodimer. Contains one covalently linked phytochromobilin chromophore.

Its function is as follows. Regulatory photoreceptor which exists in two forms that are reversibly interconvertible by light: the Pr form that absorbs maximally in the red region of the spectrum and the Pfr form that absorbs maximally in the far-red region. Photoconversion of Pr to Pfr induces an array of morphogenic responses, whereas reconversion of Pfr to Pr cancels the induction of those responses. Pfr controls the expression of a number of nuclear genes including those encoding the small subunit of ribulose-bisphosphate carboxylase, chlorophyll A/B binding protein, protochlorophyllide reductase, rRNA, etc. It also controls the expression of its own gene(s) in a negative feedback fashion. This is Phytochrome from Picea abies (Norway spruce).